The primary structure comprises 148 residues: Snaclec 4 (148 aa).

An N-terminal signal peptide occupies residues 1 to 23 (MGRFIFVSFSLLVVFFSLSGTEA). The region spanning 34-148 (YDQNCYKAFE…DTQFRLQEPG (115 aa)) is the C-type lectin domain.

It belongs to the snaclec family. In terms of assembly, heterodimer; disulfide-linked. Post-translationally, contains disulfide bonds. Expressed by the venom gland.

Its subcellular location is the secreted. Interferes with one step of hemostasis (modulation of platelet aggregation, or coagulation cascade, for example). The protein is Snaclec 4 of Echis pyramidum leakeyi (Leakey's carpet viper).